The sequence spans 196 residues: Sesquiterpene phosphatase astK (196 aa).

This sequence belongs to the HAD-like hydrolase superfamily.

It carries out the reaction (S,S)-drim-8-en-11-yl phosphate + H2O = (S,S)-drim-8-en-11-ol + phosphate. It functions in the pathway secondary metabolite biosynthesis; terpenoid biosynthesis. In terms of biological role, sesquiterpene phosphatase; part of the gene cluster that mediates the biosynthesis of astellolides, drimane-type sesquiterpene esters that show antimicrobial, anti-inflammatory, and anti-tumor activities. The first step in astellolide biosynthesis is performed by the sesquiterpene cyclase astC that catalyzes the formation of drimanyl pyrophosphate from farnesyl pyrophosphate. Drimanyl pyrophosphate is then dephosphorylated by the sesquiterpene phosphatase astI to produce drimanyl monophosphate which is further dephosphorylated to drim-8-ene-11-ol by atsK. Drim-8-ene-11-ol is converted to confertifolin, probably by the cytochrome P450 monooxygenase astD and/or the dehydrogenase astE. The cytochrome P450 monooxygenases astB, astF and astJ then hydroxylate confertifolin at C6, C14, or C15 to form trihydroxy confertifolin. The nonribosomal peptide synthetase astA catalyzes ester bond formation between trihydroxy contifolin and benzoic acid (BA) or 4-hydroxy benzoic acid (4HBA), leading to the formation of dideacetyl astellolides A and B, respectively. Finally, the O-acetyltransferase astG converts dideacetyl astellolides A and B into deacetyl astellolides A and B. The protein is Sesquiterpene phosphatase astK of Aspergillus oryzae (strain ATCC 42149 / RIB 40) (Yellow koji mold).